A 135-amino-acid polypeptide reads, in one-letter code: Ribosome-binding factor A (135 aa).

This sequence belongs to the RbfA family. In terms of assembly, monomer. Binds 30S ribosomal subunits, but not 50S ribosomal subunits or 70S ribosomes.

Its subcellular location is the cytoplasm. One of several proteins that assist in the late maturation steps of the functional core of the 30S ribosomal subunit. Associates with free 30S ribosomal subunits (but not with 30S subunits that are part of 70S ribosomes or polysomes). Required for efficient processing of 16S rRNA. May interact with the 5'-terminal helix region of 16S rRNA. In Methylobacterium nodulans (strain LMG 21967 / CNCM I-2342 / ORS 2060), this protein is Ribosome-binding factor A.